Here is a 551-residue protein sequence, read N- to C-terminus: Gliomedin (551 aa).

The Cytoplasmic portion of the chain corresponds to 1–17 (MARGAEGGRGDAGWGLR). The chain crosses the membrane as a helical; Signal-anchor for type II membrane protein span at residues 18–39 (GALAAVALLSALNAAGTVFALC). The Extracellular portion of the chain corresponds to 40 to 551 (QWRGLSSALR…VQFLSTTLNQ (512 aa)). The disordered stretch occupies residues 72–107 (LSRAPRGASAPPQDPASSARNKRSHSGEPAPHIRAE). The segment covering 79 to 90 (ASAPPQDPASSA) has biased composition (low complexity). An N-linked (GlcNAc...) asparagine glycan is attached at asparagine 130. Collagen-like domains follow at residues 137–195 (LTGP…RGEK) and 196–222 (GDHGELGLQGNEGPPGQKGEKGDKGDV). The segment at 139–282 (GPSGPPGPPG…GETCAIPNDD (144 aa)) is disordered. Basic and acidic residues-rich tracts occupy residues 191–200 (ERGEKGDHGE) and 213–222 (KGEKGDKGDV). Residues 237 to 253 (PPGPPGPPGPPGPPGPP) show a composition bias toward pro residues. The region spanning 299-546 (QAESMITSIG…LMLYPVQFLS (248 aa)) is the Olfactomedin-like domain. N-linked (GlcNAc...) asparagine glycosylation is found at asparagine 329, asparagine 357, asparagine 378, and asparagine 464.

In terms of assembly, homotrimer (via collagen-like domains). Interacts with NRCAM and NFASC/neurofascin. Interaction with glial NRCAM enhances interaction with axonal NFASC. Interacts with MYOC. In terms of processing, N-glycosylated. Proteolytic processing by a furin-like protease causes shedding of the ectodomain. Further cleavage by BMP1 releases the olfactomedin-like domain. As to expression, specifically expressed in spinal cord, brain, placenta and sciatic nerve. More abundant in peripheral than central nervous system.

The protein resides in the cell membrane. It is found in the cell projection. It localises to the axon. Its subcellular location is the secreted. The protein localises to the extracellular space. The protein resides in the extracellular matrix. Its function is as follows. Ligand for NRCAM and NFASC/neurofascin that plays a role in the formation and maintenance of the nodes of Ranvier on myelinated axons. Mediates interaction between Schwann cell microvilli and axons via its interactions with NRCAM and NFASC. Nodes of Ranvier contain clustered sodium channels that are crucial for the saltatory propagation of action potentials along myelinated axons. During development, nodes of Ranvier are formed by the fusion of two heminodes. Required for normal clustering of sodium channels at heminodes; not required for the formation of mature nodes with normal sodium channel clusters. Required, together with NRCAM, for maintaining NFASC and sodium channel clusters at mature nodes of Ranvier. The chain is Gliomedin (GLDN) from Homo sapiens (Human).